We begin with the raw amino-acid sequence, 337 residues long: Vegetative-specific protein H5 (337 aa).

An Involved in the stabilization of the negatively charged intermediate by the formation of the oxyanion hole motif is present at residues 88-90; sequence HGG. Active-site residues include Ser-161, Asp-261, and His-291.

This sequence belongs to the 'GDXG' lipolytic enzyme family.

The chain is Vegetative-specific protein H5 (cinB) from Dictyostelium discoideum (Social amoeba).